The sequence spans 59 residues: MGIIKFLKNVGKEMKKVTWPKGKELTRYTITVITTVIFFAIFFALIDSGITQLIRLIVE.

A helical membrane pass occupies residues 30 to 50; it reads ITVITTVIFFAIFFALIDSGI.

It belongs to the SecE/SEC61-gamma family. In terms of assembly, component of the Sec protein translocase complex. Heterotrimer consisting of SecY, SecE and SecG subunits. The heterotrimers can form oligomers, although 1 heterotrimer is thought to be able to translocate proteins. Interacts with the ribosome. Interacts with SecDF, and other proteins may be involved. Interacts with SecA.

Its subcellular location is the cell membrane. Essential subunit of the Sec protein translocation channel SecYEG. Clamps together the 2 halves of SecY. May contact the channel plug during translocation. This is Protein translocase subunit SecE from Bacillus licheniformis.